We begin with the raw amino-acid sequence, 329 residues long: ATP-dependent (S)-NAD(P)H-hydrate dehydratase (329 aa).

Residues 35-326 (TLQLVRNIIP…AEVGAAFSKL (292 aa)) form the YjeF C-terminal domain. Position 67 is a phosphotyrosine (tyrosine 67). Residues glycine 135 and 188 to 194 (NHMEFSR) each bind (6S)-NADPHX. Asparagine 207 and asparagine 222 each carry an N-linked (GlcNAc...) asparagine glycan. Residues 228 to 232 (KGERD) and 247 to 256 (GSSRRCGGQG) each bind ATP. Aspartate 257 contacts (6S)-NADPHX. N-linked (GlcNAc...) asparagine glycosylation is present at asparagine 279.

It belongs to the NnrD/CARKD family. Requires Mg(2+) as cofactor.

The protein localises to the mitochondrion. It catalyses the reaction (6S)-NADHX + ATP = ADP + phosphate + NADH + H(+). It carries out the reaction (6S)-NADPHX + ATP = ADP + phosphate + NADPH + H(+). In terms of biological role, catalyzes the dehydration of the S-form of NAD(P)HX at the expense of ATP, which is converted to ADP. Together with NAD(P)HX epimerase, which catalyzes the epimerization of the S- and R-forms, the enzyme allows the repair of both epimers of NAD(P)HX, a damaged form of NAD(P)H that is a result of enzymatic or heat-dependent hydration. This chain is ATP-dependent (S)-NAD(P)H-hydrate dehydratase, found in Pongo abelii (Sumatran orangutan).